We begin with the raw amino-acid sequence, 330 residues long: Thioredoxin domain-containing protein 6 (330 aa).

In terms of domain architecture, Thioredoxin spans 11-115 (QVNISTQELW…QKTILDQLEA (105 aa)). The interval 157-303 (ERTCTLAIIK…LFPSLKFSDK (147 aa)) is NDK. The disordered stretch occupies residues 300–330 (FSDKDTEAPQGGEAEATAGPTEALCFPEDVD). Residues 307 to 322 (APQGGEAEATAGPTEA) show a composition bias toward low complexity.

Belongs to the NDK family. As to quaternary structure, monomer and homodimer. As to expression, detected at very low levels in testis, lung and brain.

It localises to the cytoplasm. Its subcellular location is the cytoskeleton. The protein localises to the cilium axoneme. It is found in the dynein axonemal particle. Functionally, may be a regulator of microtubule physiology. In Homo sapiens (Human), this protein is Thioredoxin domain-containing protein 6.